The following is a 209-amino-acid chain: Probable GTP-binding protein EngB (209 aa).

An EngB-type G domain is found at 12–203 (VSFEIIFVGR…RDRLHEMKRD (192 aa)). GTP contacts are provided by residues 20 to 27 (GRSNVGKS), 45 to 49 (GVTLR), 62 to 65 (DMPG), 142 to 145 (NKMD), and 179 to 181 (ISA). Mg(2+)-binding residues include Ser27 and Thr47.

This sequence belongs to the TRAFAC class TrmE-Era-EngA-EngB-Septin-like GTPase superfamily. EngB GTPase family. Mg(2+) serves as cofactor.

In terms of biological role, necessary for normal cell division and for the maintenance of normal septation. The chain is Probable GTP-binding protein EngB from Methanosarcina barkeri (strain Fusaro / DSM 804).